The chain runs to 311 residues: Probable manganese-dependent inorganic pyrophosphatase (311 aa).

6 residues coordinate Mn(2+): His9, Asp13, Asp15, Asp75, His97, and Asp149.

It belongs to the PPase class C family. Requires Mn(2+) as cofactor.

It localises to the cytoplasm. It catalyses the reaction diphosphate + H2O = 2 phosphate + H(+). The sequence is that of Probable manganese-dependent inorganic pyrophosphatase from Shouchella clausii (strain KSM-K16) (Alkalihalobacillus clausii).